An 86-amino-acid polypeptide reads, in one-letter code: U15-lycotoxin-Ls1c (86 aa).

The N-terminal stretch at 1-20 (MNSKIFAVLLLLAFLSCVLS) is a signal peptide. In terms of domain architecture, WAP spans 21–66 (DQYCPKSSITACKKMNIRNDCCKDDDCTGGSWCCATPCGNICKYPT). Cystine bridges form between Cys-24–Cys-54, Cys-32–Cys-58, Cys-41–Cys-53, Cys-42–Cys-80, and Cys-47–Cys-62.

This sequence belongs to the venom protein 11 family. 01 (wap-1) subfamily. In terms of processing, contains 5 disulfide bonds. Expressed by the venom gland.

It is found in the secreted. Its function is as follows. Has antibacterial activity. The polypeptide is U15-lycotoxin-Ls1c (Lycosa singoriensis (Wolf spider)).